Here is a 261-residue protein sequence, read N- to C-terminus: Small ribosomal subunit protein uS2 (261 aa).

The protein belongs to the universal ribosomal protein uS2 family.

This chain is Small ribosomal subunit protein uS2, found in Paracoccus denitrificans (strain Pd 1222).